The chain runs to 570 residues: Formate--tetrahydrofolate ligase (570 aa).

T65–T72 contacts ATP.

This sequence belongs to the formate--tetrahydrofolate ligase family.

It catalyses the reaction (6S)-5,6,7,8-tetrahydrofolate + formate + ATP = (6R)-10-formyltetrahydrofolate + ADP + phosphate. The protein operates within one-carbon metabolism; tetrahydrofolate interconversion. In Shewanella halifaxensis (strain HAW-EB4), this protein is Formate--tetrahydrofolate ligase.